Reading from the N-terminus, the 85-residue chain is NAD(P)H-quinone oxidoreductase subunit O (85 aa).

The protein belongs to the complex I NdhO subunit family. As to quaternary structure, NDH-1 can be composed of about 15 different subunits; different subcomplexes with different compositions have been identified which probably have different functions.

It is found in the cellular thylakoid membrane. The enzyme catalyses a plastoquinone + NADH + (n+1) H(+)(in) = a plastoquinol + NAD(+) + n H(+)(out). The catalysed reaction is a plastoquinone + NADPH + (n+1) H(+)(in) = a plastoquinol + NADP(+) + n H(+)(out). In terms of biological role, NDH-1 shuttles electrons from an unknown electron donor, via FMN and iron-sulfur (Fe-S) centers, to quinones in the respiratory and/or the photosynthetic chain. The immediate electron acceptor for the enzyme in this species is believed to be plastoquinone. Couples the redox reaction to proton translocation, and thus conserves the redox energy in a proton gradient. Cyanobacterial NDH-1 also plays a role in inorganic carbon-concentration. This chain is NAD(P)H-quinone oxidoreductase subunit O, found in Synechococcus sp. (strain WH7803).